A 95-amino-acid polypeptide reads, in one-letter code: Aspartyl/glutamyl-tRNA(Asn/Gln) amidotransferase subunit C (95 aa).

The protein belongs to the GatC family. As to quaternary structure, heterotrimer of A, B and C subunits.

The enzyme catalyses L-glutamyl-tRNA(Gln) + L-glutamine + ATP + H2O = L-glutaminyl-tRNA(Gln) + L-glutamate + ADP + phosphate + H(+). It catalyses the reaction L-aspartyl-tRNA(Asn) + L-glutamine + ATP + H2O = L-asparaginyl-tRNA(Asn) + L-glutamate + ADP + phosphate + 2 H(+). Its function is as follows. Allows the formation of correctly charged Asn-tRNA(Asn) or Gln-tRNA(Gln) through the transamidation of misacylated Asp-tRNA(Asn) or Glu-tRNA(Gln) in organisms which lack either or both of asparaginyl-tRNA or glutaminyl-tRNA synthetases. The reaction takes place in the presence of glutamine and ATP through an activated phospho-Asp-tRNA(Asn) or phospho-Glu-tRNA(Gln). This Rhizobium johnstonii (strain DSM 114642 / LMG 32736 / 3841) (Rhizobium leguminosarum bv. viciae) protein is Aspartyl/glutamyl-tRNA(Asn/Gln) amidotransferase subunit C.